Consider the following 57-residue polypeptide: uncharacterized protein (57 aa).

Transmembrane regions (helical) follow at residues 2-22 and 29-49; these read LLVVIFGLVALFALWGVLRSV and GFLLAGATLFVFGWFTVMTVI.

It localises to the cell membrane. This is an uncharacterized protein from Bacillus subtilis (strain 168).